A 282-amino-acid polypeptide reads, in one-letter code: Uracil-DNA glycosylase (282 aa).

Residues 15 to 40 (SAASKRKSASNTENIPEKVPAGNENQ) are disordered. The active-site Proton acceptor is the Asp123.

The protein belongs to the uracil-DNA glycosylase (UDG) superfamily. UNG family.

It is found in the mitochondrion. The protein resides in the nucleus. The catalysed reaction is Hydrolyzes single-stranded DNA or mismatched double-stranded DNA and polynucleotides, releasing free uracil.. Its activity is regulated as follows. Inhibited by UGI, a B.subtilis bacteriophage PBS2 peptide inhibitor. Excises uracil residues from the DNA which can arise as a result of misincorporation of dUMP residues by DNA polymerase or due to deamination of cytosine. The polypeptide is Uracil-DNA glycosylase (Caenorhabditis elegans).